The primary structure comprises 616 residues: Protein cereblon (616 aa).

Disordered regions lie at residues 1 to 39 (MDEE…DDSV), 63 to 137 (FGPS…AMPR), and 182 to 220 (SQER…DIDM). The segment covering 11-32 (AQEQEVAGSAGEAAAGPSGAEV) has biased composition (low complexity). The span at 96–107 (SEEDIVLDDGTE) shows a compositional bias: acidic residues. The segment covering 183 to 192 (QERRRSRNSD) has biased composition (basic and acidic residues). Residues 194–203 (VSPEAEDDEL) show a composition bias toward acidic residues. Over residues 206–215 (HPPPPPPRPP) the composition is skewed to pro residues. Residues 257-482 (HMLIFLHQYI…LIGGILKEET (226 aa)) enclose the Lon N-terminal domain. The CULT domain maps to 481-590 (ETLFYCRYCN…LAGSSVRIGK (110 aa)). Zn(2+) is bound by residues cysteine 486, cysteine 489, cysteine 555, and cysteine 558.

This sequence belongs to the CRBN family. In terms of assembly, likely a component of a DCX (DDB1-CUL4-X-box) protein ligase complex. May interact with pic/DDB1. In terms of processing, ubiquitinated.

The protein localises to the nucleus. Its pathway is protein modification; protein ubiquitination. Its function is as follows. Substrate recognition component of a DCX (DDB1-CUL4-X-box) E3 protein ligase complex that mediates the ubiquitination and subsequent proteasomal degradation of target proteins. Has an essential role in mediating growth by negatively regulating insulin signaling. It also has a role in maintaining presynaptic function in the neuromuscular junction synapses of third-instar larvae. In Drosophila persimilis (Fruit fly), this protein is Protein cereblon.